The following is a 1093-amino-acid chain: Fused isobutyryl-CoA mutase (1093 aa).

Residues 1 to 20 (MTDLSDVSRTAAAKPPAVPG) form a disordered region. The region spanning 26-156 (KVRFVTAASL…AGMITDMAQR (131 aa)) is the B12-binding domain. Residue His-39 participates in adenosylcob(III)alamin binding. Positions 169–417 (LDTVVAGDRR…YQGLVGALGA (249 aa)) are GTPase chaperone MeaI. A GTP-binding site is contributed by 219-224 (GAGKSS). The Mg(2+) site is built by Ser-223, Ile-248, Asp-249, and Asp-262. Arg-265 contacts GTP. Mg(2+) contacts are provided by Glu-310 and Thr-311. 357-360 (NKFD) lines the GTP pocket. The linker stretch occupies residues 418-579 (RGMSLKPGTL…MRENVPGSFP (162 aa)). Phe-587, Arg-622, Arg-728, Tyr-772, Ser-821, Arg-856, and Lys-861 together coordinate substrate. Residues Glu-973 and Asn-1092 each contribute to the GTP site.

This sequence belongs to the IcmF family. As to quaternary structure, homodimer. The cofactor is adenosylcob(III)alamin. Requires Mg(2+) as cofactor.

The catalysed reaction is 2-methylpropanoyl-CoA = butanoyl-CoA. The enzyme catalyses 3-methylbutanoyl-CoA = 2,2-dimethylpropanoyl-CoA. It catalyses the reaction GTP + H2O = GDP + phosphate + H(+). With respect to regulation, is prone to inactivation during catalytic turnover due to the occasional loss of the 5'-deoxyadenosine moiety and formation of the inactive cob(II)alamin cofactor in its active site. The GTPase activity of IcmF powers the ejection of the inactive cofactor and requires the presence of an acceptor protein, adenosyltransferase (ATR), for receiving it. ATR, in turn, catalyzes an adenosylation reaction converting cob(II)alamin in the presence of ATP and a reductant to the active AdoCbl cofactor. The repaired cofactor is then reloaded onto IcmF in a GTPase-gated step, regenerating active enzyme. The GTPase activity of IcmF is significantly decreased in the presence of excess of AdoCbl or cob(II)alamin and is higher in the apoenzyme state, indicating that the G-domain senses the presence and identity of the cofactor in the mutase active site. Functionally, catalyzes the reversible interconversion of isobutyryl-CoA and n-butyryl-CoA, and to a much lesser extent, of pivalyl-CoA and isovaleryl-CoA, using radical chemistry. Also exhibits GTPase activity, associated with its G-protein domain (MeaI) that functions as a chaperone that assists cofactor delivery and proper holo-enzyme assembly. The G-domain of IcmF also has a role in its cofactor repair. Does not display ATPase activity. This Cupriavidus metallidurans (strain ATCC 43123 / DSM 2839 / NBRC 102507 / CH34) (Ralstonia metallidurans) protein is Fused isobutyryl-CoA mutase.